The sequence spans 274 residues: MTKKYDLHCHSTASDGVLSPTELVHRAYAQGVNVLALCDHDTIAGIDEAEIAAKEVGIELITGVEISTNWEGRGIHIVGLNFDKTHPKMTALLQSQKALREKRAVEIGDKLEKAGIPNAYDGAKALADGEVTRAHYARYLVQIGKVSNDGQAFKRYLGQGKSAFVKAEWADIPTAIETIHAAGGIAIIAHPLRYNMTGKWVRKLIVDFKAWGGDGMEMADCGQTKDQRQMLARWAKEFDLQGSVGSDFHFPCGWIELGKNLDLVDSVIPVWEKF.

Residues H8, H10, D15, H40, E65, H76, H190, D247, and H249 each coordinate Mn(2+).

Belongs to the PHP family. TrpH/YciV subfamily. Mn(2+) serves as cofactor.

It carries out the reaction a ribonucleoside 3',5'-bisphosphate + H2O = a ribonucleoside 5'-phosphate + phosphate. In terms of biological role, efficiently catalyzes the hydrolysis of the 3'-phosphate from 3',5'-bis-phosphonucleotides as well as the successive hydrolysis of 5'-phosphomononucleotides from the 5'-end of short pieces of RNA and DNA, with no specificity toward the identity of the nucleotide base. Is more efficient at hydrolyzing RNA oligonucleotides than DNA oligonucleotides. This enzyme can also hydrolyze annealed DNA duplexes, albeit at a catalytic efficiency lower than that of the corresponding single-stranded oligonucleotides. The chain is 5'-3' exoribonuclease from Haemophilus influenzae (strain ATCC 51907 / DSM 11121 / KW20 / Rd).